The primary structure comprises 455 residues: Ribulose bisphosphate carboxylase large chain (455 aa).

K5 carries the N6,N6,N6-trimethyllysine modification. Substrate-binding residues include N114 and T164. The active-site Proton acceptor is K166. K168 lines the substrate pocket. Positions 192, 194, and 195 each coordinate Mg(2+). An N6-carboxylysine modification is found at K192. The Proton acceptor role is filled by H285. 3 residues coordinate substrate: R286, H318, and S370.

Belongs to the RuBisCO large chain family. Type I subfamily. Heterohexadecamer of 8 large chains and 8 small chains; disulfide-linked. The disulfide link is formed within the large subunit homodimers. Mg(2+) is required as a cofactor. The disulfide bond which can form in the large chain dimeric partners within the hexadecamer appears to be associated with oxidative stress and protein turnover.

It is found in the plastid. It localises to the chloroplast. The enzyme catalyses 2 (2R)-3-phosphoglycerate + 2 H(+) = D-ribulose 1,5-bisphosphate + CO2 + H2O. The catalysed reaction is D-ribulose 1,5-bisphosphate + O2 = 2-phosphoglycolate + (2R)-3-phosphoglycerate + 2 H(+). RuBisCO catalyzes two reactions: the carboxylation of D-ribulose 1,5-bisphosphate, the primary event in carbon dioxide fixation, as well as the oxidative fragmentation of the pentose substrate in the photorespiration process. Both reactions occur simultaneously and in competition at the same active site. This Lupinus albus (White lupine) protein is Ribulose bisphosphate carboxylase large chain.